Reading from the N-terminus, the 193-residue chain is Large ribosomal subunit protein bL25 (193 aa).

It belongs to the bacterial ribosomal protein bL25 family. CTC subfamily. Part of the 50S ribosomal subunit; part of the 5S rRNA/L5/L18/L25 subcomplex. Contacts the 5S rRNA. Binds to the 5S rRNA independently of L5 and L18.

Its function is as follows. This is one of the proteins that binds to the 5S RNA in the ribosome where it forms part of the central protuberance. In Lachnoclostridium phytofermentans (strain ATCC 700394 / DSM 18823 / ISDg) (Clostridium phytofermentans), this protein is Large ribosomal subunit protein bL25.